A 112-amino-acid chain; its full sequence is Protein 4.2 (112 aa).

Residues 64–93 are disordered; that stretch reads KPDGLNHQVTQGKKSHTQSQQTGPTTLTSD. Polar residues predominate over residues 70-92; sequence HQVTQGKKSHTQSQQTGPTTLTS.

In Escherichia phage T7 (Bacteriophage T7), this protein is Protein 4.2.